A 510-amino-acid chain; its full sequence is UDP-N-acetylmuramoylalanine--D-glutamate ligase (510 aa).

ATP is bound at residue G138–T144. A disordered region spans residues F294 to R316.

Belongs to the MurCDEF family.

Its subcellular location is the cytoplasm. The catalysed reaction is UDP-N-acetyl-alpha-D-muramoyl-L-alanine + D-glutamate + ATP = UDP-N-acetyl-alpha-D-muramoyl-L-alanyl-D-glutamate + ADP + phosphate + H(+). It functions in the pathway cell wall biogenesis; peptidoglycan biosynthesis. Its function is as follows. Cell wall formation. Catalyzes the addition of glutamate to the nucleotide precursor UDP-N-acetylmuramoyl-L-alanine (UMA). This is UDP-N-acetylmuramoylalanine--D-glutamate ligase from Bordetella pertussis (strain Tohama I / ATCC BAA-589 / NCTC 13251).